The chain runs to 151 residues: uncharacterized protein (151 aa).

The interval 1-77 (MSLLGGMWKS…LGSNPISSSR (77 aa)) is disordered. Low complexity-rich tracts occupy residues 19–54 (PKPS…RSSN) and 63–76 (SISG…ISSS).

This is an uncharacterized protein from Methanothermobacter marburgensis (strain ATCC BAA-927 / DSM 2133 / JCM 14651 / NBRC 100331 / OCM 82 / Marburg) (Methanobacterium thermoautotrophicum).